We begin with the raw amino-acid sequence, 288 residues long: DegV domain-containing protein DR_1903 (288 aa).

One can recognise a DegV domain in the interval isoleucine 2–proline 280. Residues threonine 59 and threonine 93 each coordinate hexadecanoate.

May bind long-chain fatty acids, such as palmitate, and may play a role in lipid transport or fatty acid metabolism. This is DegV domain-containing protein DR_1903 from Deinococcus radiodurans (strain ATCC 13939 / DSM 20539 / JCM 16871 / CCUG 27074 / LMG 4051 / NBRC 15346 / NCIMB 9279 / VKM B-1422 / R1).